The following is an 87-amino-acid chain: Small ribosomal subunit protein bS20 (87 aa).

The segment at 1–21 is disordered; that stretch reads MANHKSAEKRARQTIKKTERN.

It belongs to the bacterial ribosomal protein bS20 family.

Binds directly to 16S ribosomal RNA. This is Small ribosomal subunit protein bS20 from Campylobacter jejuni subsp. jejuni serotype O:23/36 (strain 81-176).